The following is a 290-amino-acid chain: Shikimate dehydrogenase (NADP(+)) (290 aa).

Shikimate contacts are provided by residues 20 to 22 (SLS) and T67. The active-site Proton acceptor is K71. Shikimate-binding residues include N92 and D107. Residues 132–136 (GAGGA) and M228 each bind NADP(+). Y230 provides a ligand contact to shikimate. G251 is a binding site for NADP(+).

It belongs to the shikimate dehydrogenase family. As to quaternary structure, homodimer.

The catalysed reaction is shikimate + NADP(+) = 3-dehydroshikimate + NADPH + H(+). Its pathway is metabolic intermediate biosynthesis; chorismate biosynthesis; chorismate from D-erythrose 4-phosphate and phosphoenolpyruvate: step 4/7. Functionally, involved in the biosynthesis of the chorismate, which leads to the biosynthesis of aromatic amino acids. Catalyzes the reversible NADPH linked reduction of 3-dehydroshikimate (DHSA) to yield shikimate (SA). The chain is Shikimate dehydrogenase (NADP(+)) from Geobacter sp. (strain M21).